A 201-amino-acid polypeptide reads, in one-letter code: Recombination protein RecR (201 aa).

Residues 60 to 75 (CKTCGNIDTQNPCTVC) form a C4-type zinc finger. A Toprim domain is found at 83 to 178 (SIIVVVADVA…KVTRLAHGVP (96 aa)).

This sequence belongs to the RecR family.

May play a role in DNA repair. It seems to be involved in an RecBC-independent recombinational process of DNA repair. It may act with RecF and RecO. The polypeptide is Recombination protein RecR (Rhodopseudomonas palustris (strain HaA2)).